A 192-amino-acid polypeptide reads, in one-letter code: UPF0301 protein Bmul_2524/BMULJ_00714 (192 aa).

The protein belongs to the UPF0301 (AlgH) family.

The polypeptide is UPF0301 protein Bmul_2524/BMULJ_00714 (Burkholderia multivorans (strain ATCC 17616 / 249)).